The primary structure comprises 199 residues: MDFKIEHTWDGFPVKHEPVFIRLNPGDRGVMMDISAPFFRDPPAPLGEPGKPFNELWDYEVVEAFFLNDITEQYLEVELCPHGQHLVLLLSGRRNVWKQELPLSFRMSRGETKWEGKAYLPWSYFPPNVTKFNSFAIHGSKDKRSYEALYPVPQHELQQGQKPDFHCLEYFKSFNFNTLLGEEWKQPESDLWLIEKCDI.

Belongs to the UPF0462 family.

The polypeptide is UPF0462 protein C4orf33 (C4orf33) (Homo sapiens (Human)).